The sequence spans 325 residues: Metacaspase-9 (325 aa).

Catalysis depends on residues His-95 and Cys-147. Cys-147 is modified (S-nitrosocysteine). The N-linked (GlcNAc...) asparagine glycan is linked to Asn-177.

Belongs to the peptidase C14B family. The two subunits are derived from the precursor sequence by an autocatalytic mechanism. In terms of processing, S-nitrosylation at Cys-147 suppresses both autoprocessing and proteolytic activity of the full-length protein, but does not affect the activity of the mature processed form. In terms of tissue distribution, expressed in root tips, cauline leaves, flowers and siliques.

The protein resides in the secreted. Its subcellular location is the extracellular space. It is found in the apoplast. Its activity is regulated as follows. Inhibited by serpin ZX and nitric oxide through cysteine nitrosylation. Its function is as follows. Cysteine protease that cleaves specifically after arginine or lysine residues. Does not cleave caspase-specific substrates. Required for proteolytic processing of GRI. The chain is Metacaspase-9 (AMC9) from Arabidopsis thaliana (Mouse-ear cress).